The following is a 414-amino-acid chain: Peptidoglycan beta-N-acetylmuramidase NamZ (414 aa).

An N-terminal signal peptide occupies residues Met-1–Ala-23.

This sequence belongs to the glycoside hydrolase 171 family. As to quaternary structure, homodimer in solution.

The protein resides in the secreted. It catalyses the reaction Hydrolysis of terminal, non-reducing N-acetylmuramic residues.. Functionally, catalyzes the exo-lytic cleavage of beta-1,4-N-acetylmuramate (beta-1,4-MurNAc) from the non-reducing ends of peptidoglycan chains. Specifically hydrolyzes the natural, peptidoglycan-derived disaccharide MurNAc-GlcNAc and the artificial substrate para-nitrophenyl beta-N-acetylmuramic acid (pNP-MurNAc). Requires a MurNAc entity at the non-reducing end, and cannot cleave GlcNAc-MurNAc. Probably plays a role in cell wall turnover and recycling. The sequence is that of Peptidoglycan beta-N-acetylmuramidase NamZ from Bacillus subtilis (strain 168).